We begin with the raw amino-acid sequence, 514 residues long: Beta-glucosidase 16 (514 aa).

Positions 1-21 (MRGKFLSLLLLITLACIGVSA) are cleaved as a signal peptide. Position 49 (Gln49) interacts with a beta-D-glucoside. Asn80 carries N-linked (GlcNAc...) asparagine glycosylation. A beta-D-glucoside-binding positions include His153 and 198–199 (NE). Catalysis depends on Glu199, which acts as the Proton donor. A disulfide bond links Cys218 and Cys226. Tyr343 provides a ligand contact to a beta-D-glucoside. Asn357 is a glycosylation site (N-linked (GlcNAc...) asparagine). A beta-D-glucoside contacts are provided by residues Glu413, Trp458, 465-466 (EW), and Phe474. The active-site Nucleophile is Glu413.

Belongs to the glycosyl hydrolase 1 family. In terms of tissue distribution, expressed at low levels in cauline leaves and flowers.

The enzyme catalyses Hydrolysis of terminal, non-reducing beta-D-glucosyl residues with release of beta-D-glucose.. This is Beta-glucosidase 16 from Arabidopsis thaliana (Mouse-ear cress).